The chain runs to 226 residues: Urease accessory protein UreE (226 aa).

Positions 192-226 are disordered; that stretch reads PHGSGLHIHSIHSHGDGHSHDHDHSHGDHDSDHKH. Over residues 204 to 226 the composition is skewed to basic and acidic residues; the sequence is SHGDGHSHDHDHSHGDHDSDHKH.

This sequence belongs to the UreE family.

Its subcellular location is the cytoplasm. Functionally, involved in urease metallocenter assembly. Binds nickel. Probably functions as a nickel donor during metallocenter assembly. This is Urease accessory protein UreE from Yersinia intermedia.